We begin with the raw amino-acid sequence, 403 residues long: Non-structural maintenance of chromosomes element 4 homolog A (403 aa).

Residues 1-45 are compositionally biased toward basic and acidic residues; it reads MRKTVKRESEATGGKREADDEPEKLRSVKKEKQRKTEADSVRPDE. Disordered regions lie at residues 1-57, 194-226, and 342-403; these read MRKT…QGIS, LKQRKRAPNRKRTKPGEGVRPDEVDDSQSEEKT, and SSCP…LTSS. The span at 196 to 206 shows a compositional bias: basic residues; that stretch reads QRKRAPNRKRT. The span at 342-353 shows a compositional bias: low complexity; the sequence is SSCPAASAPASA. A compositionally biased stretch (polar residues) spans 354–363; the sequence is DFTQDTQTTP. Residues 384 to 393 show a composition bias toward basic and acidic residues; sequence TPDKEGDGTR. Residues 394–403 are compositionally biased toward basic residues; that stretch reads RRCKRRLTSS.

This sequence belongs to the NSE4 family. In terms of assembly, interacts with SMC5, SMC6A or SMC6B. The SMC5-SMC6 complex is composed of the SMC5 and SMC6 heterodimer attached via their hinge domain and from the non-SMC subunit NSE4A or NSE4B. As to expression, expressed in seedlings, rosette leaves and floral buds.

The protein resides in the nucleus. Its function is as follows. Component of the SMC5-SMC6 complex, that promotes sister chromatid alignment after DNA damage and facilitates double-stranded DNA breaks (DSBs) repair via homologous recombination between sister chromatids. In Arabidopsis thaliana (Mouse-ear cress), this protein is Non-structural maintenance of chromosomes element 4 homolog A (NSE4A).